Consider the following 308-residue polypeptide: GTP cyclohydrolase FolE2 (308 aa).

Belongs to the GTP cyclohydrolase IV family.

The enzyme catalyses GTP + H2O = 7,8-dihydroneopterin 3'-triphosphate + formate + H(+). It participates in cofactor biosynthesis; 7,8-dihydroneopterin triphosphate biosynthesis; 7,8-dihydroneopterin triphosphate from GTP: step 1/1. Its function is as follows. Converts GTP to 7,8-dihydroneopterin triphosphate. The chain is GTP cyclohydrolase FolE2 from Idiomarina loihiensis (strain ATCC BAA-735 / DSM 15497 / L2-TR).